Here is a 260-residue protein sequence, read N- to C-terminus: tRNA pseudouridine synthase C (260 aa).

The active site involves D54.

Belongs to the pseudouridine synthase RluA family.

It carries out the reaction uridine(65) in tRNA = pseudouridine(65) in tRNA. In terms of biological role, responsible for synthesis of pseudouridine from uracil-65 in transfer RNAs. The chain is tRNA pseudouridine synthase C (truC) from Salmonella typhi.